The following is a 444-amino-acid chain: Phosphoglucosamine mutase (444 aa).

The Phosphoserine intermediate role is filled by Ser-102. 4 residues coordinate Mg(2+): Ser-102, Asp-241, Asp-243, and Asp-245. The residue at position 102 (Ser-102) is a Phosphoserine.

It belongs to the phosphohexose mutase family. The cofactor is Mg(2+). Activated by phosphorylation.

The enzyme catalyses alpha-D-glucosamine 1-phosphate = D-glucosamine 6-phosphate. In terms of biological role, catalyzes the conversion of glucosamine-6-phosphate to glucosamine-1-phosphate. The protein is Phosphoglucosamine mutase of Leptothrix cholodnii (strain ATCC 51168 / LMG 8142 / SP-6) (Leptothrix discophora (strain SP-6)).